A 229-amino-acid polypeptide reads, in one-letter code: MYDISGWKHVFKLDPNKELSDEHLEMICESGTDAVIVGGSDGVTIDNVLHMLVSIRRYAVPCVLEVSDVEAITPGFDFYYIPSVLNSRKVEWVTGVHHEALKEFGDIMDWDEIFMEGYCVLNPEAKVAQLTEAKCDVTEDDVIAYARLADKLLRLPIFYLEYSGTYGDVELVKNVKAELKQAKLYYGGGISNAEQAKEMAQYADTVVVGNIIYDDIKSALKTVKAVKGE.

Position 12 (K12) interacts with sn-glycerol 1-phosphate. Positions 14 and 40 each coordinate Mg(2+). Residues 159–164, G189, and 209–210 contribute to the sn-glycerol 1-phosphate site; these read YLEYSG and GN.

This sequence belongs to the GGGP/HepGP synthase family. Group I subfamily. In terms of assembly, homodimer. The cofactor is Mg(2+).

It catalyses the reaction sn-glycerol 1-phosphate + all-trans-heptaprenyl diphosphate = 3-heptaprenyl-sn-glycero-1-phosphate + diphosphate. The protein operates within membrane lipid metabolism; glycerophospholipid metabolism. Its function is as follows. Prenyltransferase that catalyzes in vivo the transfer of the heptaprenyl moiety of heptaprenyl pyrophosphate (HepPP; 35 carbon atoms) to the C3 hydroxyl of sn-glycerol-1-phosphate (G1P), producing heptaprenylglyceryl phosphate (HepGP). This reaction is an ether-bond-formation step in the biosynthesis of archaea-type G1P-based membrane lipids found in Bacillales. This is Heptaprenylglyceryl phosphate synthase from Bacillus cereus (strain B4264).